A 310-amino-acid polypeptide reads, in one-letter code: Protoheme IX farnesyltransferase 2 (310 aa).

The next 9 helical transmembrane spans lie at 25–45, 49–69, 87–107, 120–139, 145–165, 176–196, 220–240, 242–262, and 277–297; these read PGII…AAKG, LVLM…GCAI, RVTV…LALG, ALAL…VYSL, SVYG…VGYC, AILL…IAIF, LHIV…PLAG, TGIA…AMAL, and QVFG…ALDF.

The protein belongs to the UbiA prenyltransferase family. Protoheme IX farnesyltransferase subfamily.

Its subcellular location is the cell inner membrane. It carries out the reaction heme b + (2E,6E)-farnesyl diphosphate + H2O = Fe(II)-heme o + diphosphate. It participates in porphyrin-containing compound metabolism; heme O biosynthesis; heme O from protoheme: step 1/1. Functionally, converts heme B (protoheme IX) to heme O by substitution of the vinyl group on carbon 2 of heme B porphyrin ring with a hydroxyethyl farnesyl side group. The sequence is that of Protoheme IX farnesyltransferase 2 from Shewanella baltica (strain OS185).